A 430-amino-acid polypeptide reads, in one-letter code: Glutamate-1-semialdehyde 2,1-aminomutase (430 aa).

K266 is modified (N6-(pyridoxal phosphate)lysine).

It belongs to the class-III pyridoxal-phosphate-dependent aminotransferase family. HemL subfamily. Homodimer. Requires pyridoxal 5'-phosphate as cofactor.

Its subcellular location is the cytoplasm. The enzyme catalyses (S)-4-amino-5-oxopentanoate = 5-aminolevulinate. The protein operates within porphyrin-containing compound metabolism; protoporphyrin-IX biosynthesis; 5-aminolevulinate from L-glutamyl-tRNA(Glu): step 2/2. This chain is Glutamate-1-semialdehyde 2,1-aminomutase, found in Acidithiobacillus ferrooxidans (strain ATCC 23270 / DSM 14882 / CIP 104768 / NCIMB 8455) (Ferrobacillus ferrooxidans (strain ATCC 23270)).